Consider the following 147-residue polypeptide: Peptide methionine sulfoxide reductase MsrB (147 aa).

Positions 8–131 constitute a MsrB domain; that stretch reads KEELKKVLTE…NSASLKFIPK (124 aa). Cys-120 acts as the Nucleophile in catalysis.

The protein belongs to the MsrB Met sulfoxide reductase family.

The enzyme catalyses L-methionyl-[protein] + [thioredoxin]-disulfide + H2O = L-methionyl-(R)-S-oxide-[protein] + [thioredoxin]-dithiol. The protein is Peptide methionine sulfoxide reductase MsrB of Clostridium perfringens (strain ATCC 13124 / DSM 756 / JCM 1290 / NCIMB 6125 / NCTC 8237 / Type A).